A 237-amino-acid chain; its full sequence is tRNA(His) guanylyltransferase (237 aa).

Positions 29, 30, and 77 each coordinate Mg(2+). GTP-binding positions include 29 to 34 and 76 to 77; these read DGKKFH and SD.

It belongs to the tRNA(His) guanylyltransferase family. Mg(2+) is required as a cofactor.

The catalysed reaction is a 5'-end ribonucleotide-tRNA(His) + GTP + ATP + H2O = a 5'-end phospho-guanosine-ribonucleotide-tRNA(His) + AMP + 2 diphosphate + H(+). Its function is as follows. Adds a GMP to the 5'-end of tRNA(His) after transcription and RNase P cleavage. This chain is tRNA(His) guanylyltransferase (THG1), found in Candida glabrata (strain ATCC 2001 / BCRC 20586 / JCM 3761 / NBRC 0622 / NRRL Y-65 / CBS 138) (Yeast).